We begin with the raw amino-acid sequence, 98 residues long: Small ribosomal subunit protein bS6 (98 aa).

Belongs to the bacterial ribosomal protein bS6 family.

Its function is as follows. Binds together with bS18 to 16S ribosomal RNA. The protein is Small ribosomal subunit protein bS6 of Staphylococcus carnosus (strain TM300).